The chain runs to 392 residues: Dual-specificity RNA methyltransferase RlmN (392 aa).

Residue Glu-115 is the Proton acceptor of the active site. Residues 121–358 (EVDRGTLCIS…YKAGYASPIR (238 aa)) enclose the Radical SAM core domain. Cys-128 and Cys-369 are oxidised to a cystine. [4Fe-4S] cluster-binding residues include Cys-135, Cys-139, and Cys-142. S-adenosyl-L-methionine is bound by residues 195-196 (GE), Ser-227, 249-251 (SFH), and Asn-326. The S-methylcysteine intermediate role is filled by Cys-369.

This sequence belongs to the radical SAM superfamily. RlmN family. It depends on [4Fe-4S] cluster as a cofactor.

It localises to the cytoplasm. The catalysed reaction is adenosine(2503) in 23S rRNA + 2 reduced [2Fe-2S]-[ferredoxin] + 2 S-adenosyl-L-methionine = 2-methyladenosine(2503) in 23S rRNA + 5'-deoxyadenosine + L-methionine + 2 oxidized [2Fe-2S]-[ferredoxin] + S-adenosyl-L-homocysteine. It catalyses the reaction adenosine(37) in tRNA + 2 reduced [2Fe-2S]-[ferredoxin] + 2 S-adenosyl-L-methionine = 2-methyladenosine(37) in tRNA + 5'-deoxyadenosine + L-methionine + 2 oxidized [2Fe-2S]-[ferredoxin] + S-adenosyl-L-homocysteine. In terms of biological role, specifically methylates position 2 of adenine 2503 in 23S rRNA and position 2 of adenine 37 in tRNAs. m2A2503 modification seems to play a crucial role in the proofreading step occurring at the peptidyl transferase center and thus would serve to optimize ribosomal fidelity. The chain is Dual-specificity RNA methyltransferase RlmN from Jannaschia sp. (strain CCS1).